The primary structure comprises 318 residues: Putative 2-hydroxyacid dehydrogenase SSP0606 (318 aa).

NAD(+) is bound by residues Glu156–Ile157, Ala235–Arg237, and Asp261. Arg237 is an active-site residue. The active site involves Glu266. Catalysis depends on His284, which acts as the Proton donor. His284 to Asn287 is an NAD(+) binding site.

It belongs to the D-isomer specific 2-hydroxyacid dehydrogenase family.

The protein is Putative 2-hydroxyacid dehydrogenase SSP0606 of Staphylococcus saprophyticus subsp. saprophyticus (strain ATCC 15305 / DSM 20229 / NCIMB 8711 / NCTC 7292 / S-41).